A 578-amino-acid chain; its full sequence is Cytochrome P450 monooxygenase fsoE (578 aa).

The chain crosses the membrane as a helical span at residues leucine 28–tryptophan 48. Cysteine 517 is a binding site for heme.

The protein belongs to the cytochrome P450 family. The cofactor is heme.

The protein resides in the membrane. The enzyme catalyses 3-O-(beta-D-glucopyranosyl)-isomotiol + 2 reduced [NADPH--hemoprotein reductase] + 2 O2 = 2-deacetoxyfuscoatroside + 2 oxidized [NADPH--hemoprotein reductase] + 2 H2O + 3 H(+). It carries out the reaction 3-O-(beta-D-glucopyranosyl)-2alpha-hydroxyisomotiol + 2 reduced [NADPH--hemoprotein reductase] + 2 O2 = 2-deacetylfuscoatroside + 2 oxidized [NADPH--hemoprotein reductase] + 2 H2O + 3 H(+). It catalyses the reaction 3-O-(beta-D-glucopyranosyl)-2alpha-acetoxyisomotiol + 2 reduced [NADPH--hemoprotein reductase] + 2 O2 = fuscoatroside + 2 oxidized [NADPH--hemoprotein reductase] + 2 H2O + 3 H(+). The catalysed reaction is isomotiol + reduced [NADPH--hemoprotein reductase] + O2 = 19beta-hydroxyisomotiol + oxidized [NADPH--hemoprotein reductase] + H2O + H(+). The enzyme catalyses 2alpha-hydroxyisomotiol + reduced [NADPH--hemoprotein reductase] + O2 = 2alpha,19beta-dihydroxyisomotiol + oxidized [NADPH--hemoprotein reductase] + H2O + H(+). It carries out the reaction 2alpha,19beta-dihydroxyisomotiol + reduced [NADPH--hemoprotein reductase] + O2 = 2alpha-hydroxyismotiol-19-one + oxidized [NADPH--hemoprotein reductase] + 2 H2O + H(+). It catalyses the reaction 2alpha-hydroxyismotiol-19-one + 2 reduced [NADPH--hemoprotein reductase] + O2 = 2-deacetyl,3-deglucopyranosyl-fuscoatroside + 2 oxidized [NADPH--hemoprotein reductase] + H2O + 3 H(+). Its pathway is secondary metabolite biosynthesis; terpenoid biosynthesis. Cytochrome P450 monooxygenase; part of the gene cluster that mediates the biosynthesis of the enfumafungin-type antibiotic, fuscoatroside. Within the pathway, fsoE catalyzes the oxidative cleavage of the c19-C20 bond within the E-ring, resulting in the formation of a carboxyl group and a methyl group. FsoE exhibits preferential substrate selectivity toward glycoside substrates over their aglycones. The fuscoatroside biosynthesis is initiated by the cyclization of 2,3(S)-oxidosqualene through FsoA's terpene cyclase (TC) domain, leading to the formation of the fernane skeleton isomotiol, harboring a fernane triterpene skeleton with a C8-C9 double bond. Subsequently, C2-alpha-hydroxylation mediated by fsoD results in the production of 2-alpha-hydroxy-isomotiol, which is further acetylated by fsoF. The glycosyltransferase (GT) domain of FsoA may convert isomotiol, 2-alpha-hydroxy-isomotiol, and the acetylated derivative of 2-alpha-hydroxy-isomotiol into their corresponding glycosides 3-O-(beta-D-glucopyranosyl)-isomotiol, 3-O-(beta-D-glucopyranosyl)-2-alpha-hydroxy-isomotiol, and 3-O-(beta-D-glucopyranosyl)-2-alpha-acetoxy-isomotiol, which then undergo oxidative cleavage under the action of fsoE to form s 2-deacetoxy-fuscoatroside, 2-deacetyl-fuscoatroside, and fuscoatroside, respectively. Although hydroxylation followed by acetylation of 3-O-(beta-D-glucopyranosyl)-isomotiol and 2-deacetoxy-fuscoatroside by fsoD and fsoF could not be ruled out, this process is likely to occur with difficulty due to bulky steric hindrance caused by the presence of a glycan at C3 in these compounds. Interestingly, fsoE can also utilize the aglycones isomotiol and 2-alpha-hydroxy-isomotiol as substrates to generate 19-beta-hydroxy-isomotiol and 2-alpha,19-beta-dihydroxy-isomotiol, respectively. These reactions occur with lower efficiency. Finally, fsoE can further convert 2-alpha,19-beta-dihydroxy-isomotiol into 2-alpha-hydroxy-ismotiol-19-one and 2-alpha-hydroxy-ismotiol-19-one into 2-deacetyl-3-deglucopyranosyl-fuscoatroside. The polypeptide is Cytochrome P450 monooxygenase fsoE (Humicola fuscoatra).